We begin with the raw amino-acid sequence, 151 residues long: MKSFLTEQQIRVLQLRAKGLKQSEIAEILGTSRANVSILERRALEKIEKARNTLLLWEQINSKISVEVKKGEDIFQVPEKLFKKADELGVKVPYSTAEIIAFLVEHAPIDDRLAKRDFTLFLDREDRLRVSECILEDFDEIGKHEGGKDTI.

This sequence belongs to the Tfx family.

Its function is as follows. Putative transcriptional regulator. The chain is Putative transcriptional regulatory protein TK2151 from Thermococcus kodakarensis (strain ATCC BAA-918 / JCM 12380 / KOD1) (Pyrococcus kodakaraensis (strain KOD1)).